A 225-amino-acid polypeptide reads, in one-letter code: Ribonuclease 3 (225 aa).

The region spanning 7 to 129 (IPRLCRTLGY…IIGAVYLDSD (123 aa)) is the RNase III domain. E42 contacts Mg(2+). The active site involves D46. Residues D115 and E118 each coordinate Mg(2+). E118 is an active-site residue. In terms of domain architecture, DRBM spans 155–225 (DPKTLLQELL…AAQALELIKR (71 aa)).

Belongs to the ribonuclease III family. In terms of assembly, homodimer. It depends on Mg(2+) as a cofactor.

It is found in the cytoplasm. The catalysed reaction is Endonucleolytic cleavage to 5'-phosphomonoester.. Its function is as follows. Digests double-stranded RNA. Involved in the processing of primary rRNA transcript to yield the immediate precursors to the large and small rRNAs (23S and 16S). Processes some mRNAs, and tRNAs when they are encoded in the rRNA operon. Processes pre-crRNA and tracrRNA of type II CRISPR loci if present in the organism. In Shewanella woodyi (strain ATCC 51908 / MS32), this protein is Ribonuclease 3.